The chain runs to 400 residues: Axin-like protein 1 (400 aa).

An RGS domain is found at 4-132 (RSKFSIDRVL…TTTADVNTTW (129 aa)). 2 disordered regions span residues 190–233 (QETK…TLKV) and 278–306 (GTLERPNRLFTGTNNGFSTLQPKRRGSEA). Over residues 194 to 210 (NSSETEEHAESPRKEKS) the composition is skewed to basic and acidic residues. The span at 287-298 (FTGTNNGFSTLQ) shows a compositional bias: polar residues. The DIX domain occupies 305–392 (EAPKMTVELR…RITAICRMCP (88 aa)).

Interacts with bar-1, dsh-2, gsk-3, and mig-5.

Functionally, works in parallel with pry-1 in negatively regulating bar-1 signaling in vulval precursor cells and Q neuroblasts. Shown to have a role in excretory cell development. This Caenorhabditis elegans protein is Axin-like protein 1.